A 1486-amino-acid chain; its full sequence is Protein PRRC2B (1486 aa).

Disordered regions lie at residues 1 to 20 (MSDRLGQITQGKDGKSKYST), 39 to 306 (VIPR…FPLP), 320 to 341 (QMNDQDGKERPGVARPVRPLRQ), 385 to 519 (KFSD…AREE), and 531 to 658 (LDQK…EQLY). Positions 88-137 (ANKQDQQDPKSSSVTASQPPESQPQPGLQKSVSNLQKPTQSISQENTNSV) are enriched in polar residues. Phosphoserine occurs at positions 166, 168, 222, and 226. Residues 219 to 235 (SAASLSASPTELGSRNA) are compositionally biased toward polar residues. Phosphothreonine is present on Thr228. Lys251 is covalently cross-linked (Glycyl lysine isopeptide (Lys-Gly) (interchain with G-Cter in SUMO2)). Residues 288–300 (SPQSSENQTTVER) show a composition bias toward polar residues. 2 positions are modified to phosphoserine: Ser387 and Ser415. Composition is skewed to basic and acidic residues over residues 422–433 (TDAKRTQEEGKD), 478–488 (HSAEDKEDKPP), and 501–519 (AVERARKRREEEERRAREE). Phosphoserine is present on Ser479. A coiled-coil region spans residues 494-544 (IQSEMSEAVERARKRREEEERRAREERLAACAAKLKQLDQKCRQAQKANET). Position 555 is a phosphoserine (Ser555). Positions 600–611 (SNSSSSSSSSSS) are enriched in low complexity. Ser621 is modified (phosphoserine). A compositionally biased stretch (low complexity) spans 638-656 (QRQQQQQQQQQQQQQQQEQ). A Glycyl lysine isopeptide (Lys-Gly) (interchain with G-Cter in SUMO2) cross-link involves residue Lys751. A Phosphothreonine modification is found at Thr753. Phosphoserine occurs at positions 762 and 793. Disordered regions lie at residues 792–847 (RSPD…EARK), 893–918 (EERRKKEQAAQVPVKGRGLSSRIPPR), and 950–1080 (ALPV…PGAV). A coiled-coil region spans residues 880–904 (IEVLTKKQRRLLEEERRKKEQAAQV). Residues 960–986 (SWRTAVTAFSSTEPGTSEQGFKSSQGD) are compositionally biased toward polar residues. Low complexity predominate over residues 998–1007 (SSATSSQRSS). Composition is skewed to basic and acidic residues over residues 1025–1055 (SKADSHKDQAQKQAEHKDSEQGSAQSKEHRP) and 1062–1074 (RSLKNRKGSEGAE). Ser1070 and Ser1159 each carry phosphoserine. 3 disordered regions span residues 1177–1205 (KAWENSPSLPEQSSPGGAGSGIQPPSSVG), 1410–1443 (QSIQLPPGQSLSVGAPRRVPPPGSQPPVLNTSRE), and 1455–1486 (ADSKQNVPTGGSAPSPQAYRQSEWMKNPAWEP). Residues 1181–1191 (NSPSLPEQSSP) are compositionally biased toward polar residues. Over residues 1410 to 1421 (QSIQLPPGQSLS) the composition is skewed to low complexity. The segment covering 1457-1474 (SKQNVPTGGSAPSPQAYR) has biased composition (polar residues).

The chain is Protein PRRC2B (Prrc2b) from Mus musculus (Mouse).